Here is a 155-residue protein sequence, read N- to C-terminus: UPF0178 protein Clos_2709 (155 aa).

It belongs to the UPF0178 family.

The polypeptide is UPF0178 protein Clos_2709 (Alkaliphilus oremlandii (strain OhILAs) (Clostridium oremlandii (strain OhILAs))).